The chain runs to 750 residues: Neprilysin (750 aa).

Gly-2 carries N-myristoyl glycine lipidation. Residues 2–28 are Cytoplasmic-facing; sequence GRSESQMDITDINAPKPKKKQRWTPLE. A phosphoserine mark is found at Ser-4 and Ser-6. The Stop-transfer sequence motif lies at 16-23; sequence PKPKKKQR. Residues 29–51 form a helical; Signal-anchor for type II membrane protein membrane-spanning segment; that stretch reads ISLSVLVLLLTIIAVTMIALYAT. Residues 52 to 750 are Extracellular-facing; the sequence is YDDGICKSSD…MNPERKCRVW (699 aa). The region spanning 56–750 is the Peptidase M13 domain; that stretch reads ICKSSDCIKS…MNPERKCRVW (695 aa). Disulfide bonds link Cys-57–Cys-62, Cys-80–Cys-735, Cys-88–Cys-695, Cys-143–Cys-411, Cys-234–Cys-242, and Cys-621–Cys-747. Arg-103 lines the a peptide pocket. Residues Asn-145 and Asn-211 are each glycosylated (N-linked (GlcNAc...) asparagine). Residues Asn-285, Asn-311, and Asn-325 are each glycosylated (N-linked (GlcNAc...) asparagine). Zn(2+) is bound at residue His-584. Glu-585 is an active-site residue. His-588 lines the Zn(2+) pocket. N-linked (GlcNAc...) asparagine glycosylation is present at Asn-628. Residue Glu-647 coordinates Zn(2+). Asp-651 (proton donor) is an active-site residue.

It belongs to the peptidase M13 family. Zn(2+) serves as cofactor. In terms of processing, myristoylation is a determinant of membrane targeting. Post-translationally, glycosylation at Asn-628 is necessary both for surface expression and neutral endopeptidase activity.

The protein resides in the cell membrane. The enzyme catalyses Preferential cleavage of polypeptides between hydrophobic residues, particularly with Phe or Tyr at P1'.. The catalysed reaction is substance P + H2O = substance P(1-9) + L-Leu-L-Met-NH2. It catalyses the reaction substance P + H2O = substance P(1-7) + L-Phe-Gly-L-Leu-L-Met-NH2. It carries out the reaction neurotensin + H2O = neurotensin(1-11) + L-isoleucyl-L-leucine. The enzyme catalyses neurotensin + H2O = neurotensin(1-10) + L-tyrosyl-L-isoleucyl-L-leucine. Thermolysin-like specificity, but is almost confined on acting on polypeptides of up to 30 amino acids. Biologically important in the destruction of opioid peptides such as Met- and Leu-enkephalins by cleavage of a Gly-Phe bond. Catalyzes cleavage of bradykinin, substance P and neurotensin peptides. Able to cleave angiotensin-1, angiotensin-2 and angiotensin 1-9. Involved in the degradation of the atrial natriuretic factor (ANF). Displays UV-inducible elastase activity toward skin preelastic and elastic fibers. The sequence is that of Neprilysin from Mus musculus (Mouse).